A 66-amino-acid polypeptide reads, in one-letter code: MAFLKKSLFLVLFLGLVSLSICEEEKRETEEKEYDQGEDDKSEEKRFLSLIPHIVSGVAALAKHLG.

The signal sequence occupies residues 1-22; that stretch reads MAFLKKSLFLVLFLGLVSLSIC. The propeptide occupies 23 to 46; sequence EEEKRETEEKEYDQGEDDKSEEKR. Leucine 65 carries the leucine amide modification.

Belongs to the frog skin active peptide (FSAP) family. Phylloseptin subfamily. As to expression, expressed by the skin glands.

It is found in the secreted. The protein localises to the target cell membrane. Functionally, antimicrobial peptide with activity against only a few strains of Gram-positive bacteria (S.aureus and B.megaterium). Acts in a synergistic effect in combination with Plasticin-B1 at doses that are not active alone. This chain is Phylloseptin-B1, found in Phyllomedusa bicolor (Two-colored leaf frog).